The chain runs to 2528 residues: Squalestatin tetraketide synthase clz2 (2528 aa).

Positions 14 to 409 (TVPIAIVGMS…GANAHVILES (396 aa)) constitute a Ketosynthase family 3 (KS3) domain. Residues Cys187, His291, and His331 each act as for beta-ketoacyl synthase activity in the active site. Positions 420–457 (VNGHHQKNGTTNGHKGANGTTNELNGTNGTANGHDITT) are disordered. Low complexity predominate over residues 436 to 452 (ANGTTNELNGTNGTANG). A malonyl-CoA:ACP transacylase (MAT) domain region spans residues 538 to 856 (GAQWFAMGRE…PYLSCLLRGQ (319 aa)). The segment at 925 to 1063 (HDLLGSLIPG…GRIAIELDTS (139 aa)) is N-terminal hotdog fold. Residues 925 to 1239 (HDLLGSLIPG…NQSVGQIALQ (315 aa)) form the PKS/mFAS DH domain. The segment at 925 to 1239 (HDLLGSLIPG…NQSVGQIALQ (315 aa)) is dehydratase (DH) domain. His957 (proton acceptor; for dehydratase activity) is an active-site residue. The tract at residues 1083-1239 (TRSVDPSNLY…NQSVGQIALQ (157 aa)) is C-terminal hotdog fold. Asp1148 (proton donor; for dehydratase activity) is an active-site residue. The methyltransferase (CMet) domain stretch occupies residues 1390–1590 (LYRYYTDAIK…GLDVELRDCD (201 aa)). The enoyl reductase (ER) (ER) domain stretch occupies residues 1817–2130 (GLIDTLQFSK…AGKHMGKIVI (314 aa)). The tract at residues 2153-2331 (ASYLIVGGLG…AVSIDLGMVQ (179 aa)) is ketoreductase (KR) domain. The tract at residues 2408–2430 (RARDAKEQSNSQGGGTDSKISPG) is disordered. The region spanning 2441–2518 (EAIDVVGRAI…ALATTVATKS (78 aa)) is the Carrier domain. Ser2478 carries the post-translational modification O-(pantetheine 4'-phosphoryl)serine.

It functions in the pathway secondary metabolite biosynthesis. Its function is as follows. Highly reducing polyketide synthase (HR-PKS); part of the gene cluster that mediates the biosynthesis of squalestatin S1 (SQS1, also known as zaragozic acid A), a heavily oxidized fungal polyketide that offers potent cholesterol lowering activity by targeting squalene synthase (SS). SQS1 is composed of a 2,8-dioxobicyclic[3.2.1]octane-3,4,5-tricarboxyclic acid core that is connected to two lipophilic polyketide arms. These initial steps feature the priming of an unusual benzoic acid starter unit onto the highly reducing polyketide synthase clz14, followed by oxaloacetate extension and product release to generate a tricarboxylic acid containing product. The phenylalanine ammonia lyase (PAL) clz10 and the acyl-CoA ligase clz12 are involved in transforming phenylalanine into benzoyl-CoA. The citrate synthase-like protein clz17 is involved in connecting the C-alpha-carbons of the hexaketide chain and oxaloacetate to afford the tricarboxylic acid unit. The potential hydrolytic enzymes, clz11 and clz13, are in close proximity to pks2 and may participate in product release. On the other side, the tetraketide arm is synthesized by a the squalestatin tetraketide synthase clz2 and enzymatically esterified to the core in the last biosynthetic step, by the acetyltransferase clz6. The biosynthesis of the tetraketide must involve 3 rounds of chain extension. After the first and second rounds methyl-transfer occurs, and in all rounds of extension the ketoreductase and dehydratase are active. The enoyl reductase and C-MeT of clz2 are not active in the final round of extension. The acetyltransferase clz6 appears to have a broad substrate selectivity for its acyl CoA substrate, allowing the in vitro synthesis of novel squalestatins. The biosynthesis of SQS1 requires several oxidative steps likely performed by oxidoreductases clz3, clz15 and clz16. Finally, in support of the identification of the cluster as being responsible for SQS1 production, the cluster contains a gene encoding a putative squalene synthase (SS) clz20, suggesting a likely mechanism for self-resistance. The chain is Squalestatin tetraketide synthase clz2 from Cochliobolus lunatus (Filamentous fungus).